The chain runs to 291 residues: ATP synthase gamma chain (291 aa).

Belongs to the ATPase gamma chain family. As to quaternary structure, F-type ATPases have 2 components, CF(1) - the catalytic core - and CF(0) - the membrane proton channel. CF(1) has five subunits: alpha(3), beta(3), gamma(1), delta(1), epsilon(1). CF(0) has three main subunits: a, b and c.

The protein localises to the cell inner membrane. Functionally, produces ATP from ADP in the presence of a proton gradient across the membrane. The gamma chain is believed to be important in regulating ATPase activity and the flow of protons through the CF(0) complex. The polypeptide is ATP synthase gamma chain (Neisseria gonorrhoeae (strain NCCP11945)).